Reading from the N-terminus, the 498-residue chain is MEKYILSIDQGTTSSRAILFNQKGEIAGVAQREFKQYFPQSGWVEHDANEIWTSVLAVMTEVINENDVRADQIAGIGITNQRETTVVWDKHTGRPIYHAIVWQSRQTQSICSELKQQGYEQTFRDKTGLLLDPYFAGTKVKWILDNVEGAREKAENGGLLFGTIDTWLVWKLSGKAAHITDYSNASRTLMFNIHDLEWDDELLELLTVPKNMLPEVKPSSEVYGKTIDYHFYGQEVPIAGVAGDQQAALFGQACFERGDVKNTYGTGGFMLMNTGDKAVKSESGLLTTIAYGIDGKVNYALEGSIFVSGSAIQWLRDGLRMINSAPQSESYATRVDSTEGVYVVPAFVGLGTPYWDSEARGAIFGLTRGTEKEHFIRATLESLCYQTRDVMEAMSKDSGIDVQSLRVDGGAVKNNFIMQFQADIVNTSVERPEIQETTALGAAYLAGLAVGFWESKDDIAKNWKLEEKFDPKMDEGEREKLYRGWKKAVEATQVFKTE.

Thr-12 provides a ligand contact to ADP. ATP contacts are provided by Thr-12, Thr-13, and Ser-14. Thr-12 is a binding site for sn-glycerol 3-phosphate. Arg-16 is an ADP binding site. 3 residues coordinate sn-glycerol 3-phosphate: Arg-82, Glu-83, and Tyr-134. Glycerol is bound by residues Arg-82, Glu-83, and Tyr-134. Phosphohistidine; by HPr is present on His-230. Sn-glycerol 3-phosphate is bound at residue Asp-244. 2 residues coordinate glycerol: Asp-244 and Gln-245. Residues Thr-266 and Gly-309 each coordinate ADP. Residues Thr-266, Gly-309, Gln-313, and Gly-410 each contribute to the ATP site. Positions 410 and 414 each coordinate ADP.

This sequence belongs to the FGGY kinase family. Homotetramer and homodimer (in equilibrium). The phosphoenolpyruvate-dependent sugar phosphotransferase system (PTS), including enzyme I, and histidine-containing protein (HPr) are required for the phosphorylation, which leads to the activation of the enzyme.

It catalyses the reaction glycerol + ATP = sn-glycerol 3-phosphate + ADP + H(+). Its pathway is polyol metabolism; glycerol degradation via glycerol kinase pathway; sn-glycerol 3-phosphate from glycerol: step 1/1. Its activity is regulated as follows. Activated by phosphorylation and inhibited by fructose 1,6-bisphosphate (FBP). Its function is as follows. Key enzyme in the regulation of glycerol uptake and metabolism. Catalyzes the phosphorylation of glycerol to yield sn-glycerol 3-phosphate. In Staphylococcus aureus (strain bovine RF122 / ET3-1), this protein is Glycerol kinase.